The chain runs to 72 residues: UPF0352 protein SO_2176 (72 aa).

It belongs to the UPF0352 family.

The polypeptide is UPF0352 protein SO_2176 (Shewanella oneidensis (strain ATCC 700550 / JCM 31522 / CIP 106686 / LMG 19005 / NCIMB 14063 / MR-1)).